The sequence spans 452 residues: GTPase Der (452 aa).

2 EngA-type G domains span residues 4–169 (PVVA…PPQD) and 177–352 (IQMA…EQHR). GTP-binding positions include 10–17 (GRPNVGKS), 57–61 (DTGGL), 120–123 (NKCE), 183–190 (GRPNVGKS), 230–234 (DTAGI), and 295–298 (NKWD). The 86-residue stretch at 353–438 (RRVTTAVVNE…PVRLFWRGKQ (86 aa)) folds into the KH-like domain.

The protein belongs to the TRAFAC class TrmE-Era-EngA-EngB-Septin-like GTPase superfamily. EngA (Der) GTPase family. Associates with the 50S ribosomal subunit.

Functionally, GTPase that plays an essential role in the late steps of ribosome biogenesis. The sequence is that of GTPase Der from Synechococcus sp. (strain RCC307).